The primary structure comprises 214 residues: NAD(P)H-quinone oxidoreductase subunit 5, chloroplastic (214 aa).

Helical transmembrane passes span 84–104 and 152–172; these read LFPLLILLLFTFFIGFIGIPF and SLAILGLFIAYIFYGSAYSFF.

It belongs to the complex I subunit 5 family. As to quaternary structure, NDH is composed of at least 16 different subunits, 5 of which are encoded in the nucleus.

The protein resides in the plastid. It localises to the chloroplast thylakoid membrane. It carries out the reaction a plastoquinone + NADH + (n+1) H(+)(in) = a plastoquinol + NAD(+) + n H(+)(out). The catalysed reaction is a plastoquinone + NADPH + (n+1) H(+)(in) = a plastoquinol + NADP(+) + n H(+)(out). NDH shuttles electrons from NAD(P)H:plastoquinone, via FMN and iron-sulfur (Fe-S) centers, to quinones in the photosynthetic chain and possibly in a chloroplast respiratory chain. The immediate electron acceptor for the enzyme in this species is believed to be plastoquinone. Couples the redox reaction to proton translocation, and thus conserves the redox energy in a proton gradient. The protein is NAD(P)H-quinone oxidoreductase subunit 5, chloroplastic (ndhF) of Brachypodium sylvaticum (False brome).